Consider the following 104-residue polypeptide: Large ribosomal subunit protein eL31 (104 aa).

It belongs to the eukaryotic ribosomal protein eL31 family.

This Aeropyrum pernix (strain ATCC 700893 / DSM 11879 / JCM 9820 / NBRC 100138 / K1) protein is Large ribosomal subunit protein eL31 (rpl31e).